Reading from the N-terminus, the 107-residue chain is UPF0060 membrane protein PSHAa1175 (107 aa).

4 helical membrane passes run 3 to 23 (IFGL…LPYL), 30 to 50 (SVWL…LLSL), 60 to 80 (AAYG…VDGI), and 84 to 104 (TWDL…MFAP).

This sequence belongs to the UPF0060 family.

It is found in the cell inner membrane. The protein is UPF0060 membrane protein PSHAa1175 of Pseudoalteromonas translucida (strain TAC 125).